The primary structure comprises 338 residues: Glycerol-3-phosphate dehydrogenase [NAD(P)+] (338 aa).

Residues Ser13, Trp14, and Lys108 each coordinate NADPH. Residues Lys108, Gly139, and Ser141 each contribute to the sn-glycerol 3-phosphate site. Residue Ala143 participates in NADPH binding. Sn-glycerol 3-phosphate is bound by residues Lys194, Asp247, Ser257, Arg258, and Asn259. Lys194 functions as the Proton acceptor in the catalytic mechanism. Position 258 (Arg258) interacts with NADPH. NADPH is bound by residues Val282 and Glu284.

The protein belongs to the NAD-dependent glycerol-3-phosphate dehydrogenase family.

Its subcellular location is the cytoplasm. The enzyme catalyses sn-glycerol 3-phosphate + NAD(+) = dihydroxyacetone phosphate + NADH + H(+). It carries out the reaction sn-glycerol 3-phosphate + NADP(+) = dihydroxyacetone phosphate + NADPH + H(+). The protein operates within membrane lipid metabolism; glycerophospholipid metabolism. Its function is as follows. Catalyzes the reduction of the glycolytic intermediate dihydroxyacetone phosphate (DHAP) to sn-glycerol 3-phosphate (G3P), the key precursor for phospholipid synthesis. This is Glycerol-3-phosphate dehydrogenase [NAD(P)+] from Streptococcus pneumoniae serotype 19F (strain G54).